Here is a 352-residue protein sequence, read N- to C-terminus: Glutamine synthetase cytosolic isozyme (352 aa).

Residues 19–98 enclose the GS beta-grasp domain; that stretch reads FIAEYIWIDA…VMCDTYTPAG (80 aa). Residues 105-352 enclose the GS catalytic domain; sequence KRCNAAKIFS…TSMIAETTIL (248 aa).

The protein belongs to the glutamine synthetase family. In terms of assembly, homooctamer.

It localises to the cytoplasm. The enzyme catalyses L-glutamate + NH4(+) + ATP = L-glutamine + ADP + phosphate + H(+). The polypeptide is Glutamine synthetase cytosolic isozyme (GLN1) (Daucus carota (Wild carrot)).